We begin with the raw amino-acid sequence, 414 residues long: Imidazolonepropionase (414 aa).

Fe(3+) contacts are provided by His95 and His97. Zn(2+) is bound by residues His95 and His97. Positions 104, 162, and 189 each coordinate 4-imidazolone-5-propanoate. N-formimidoyl-L-glutamate is bound at residue Tyr162. His252 provides a ligand contact to Fe(3+). His252 serves as a coordination point for Zn(2+). Gln255 provides a ligand contact to 4-imidazolone-5-propanoate. Position 326 (Asp326) interacts with Fe(3+). Position 326 (Asp326) interacts with Zn(2+). Residues Asn328 and Gly330 each contribute to the N-formimidoyl-L-glutamate site. Ser331 serves as a coordination point for 4-imidazolone-5-propanoate.

The protein belongs to the metallo-dependent hydrolases superfamily. HutI family. It depends on Zn(2+) as a cofactor. The cofactor is Fe(3+).

Its subcellular location is the cytoplasm. It carries out the reaction 4-imidazolone-5-propanoate + H2O = N-formimidoyl-L-glutamate. It participates in amino-acid degradation; L-histidine degradation into L-glutamate; N-formimidoyl-L-glutamate from L-histidine: step 3/3. In terms of biological role, catalyzes the hydrolytic cleavage of the carbon-nitrogen bond in imidazolone-5-propanoate to yield N-formimidoyl-L-glutamate. It is the third step in the universal histidine degradation pathway. This is Imidazolonepropionase from Streptomyces avermitilis (strain ATCC 31267 / DSM 46492 / JCM 5070 / NBRC 14893 / NCIMB 12804 / NRRL 8165 / MA-4680).